A 75-amino-acid chain; its full sequence is Small ribosomal subunit protein bS16c (75 aa).

The protein belongs to the bacterial ribosomal protein bS16 family.

The protein resides in the plastid. Its subcellular location is the chloroplast. This is Small ribosomal subunit protein bS16c from Cyanidium caldarium (Red alga).